We begin with the raw amino-acid sequence, 2500 residues long: MASNHEELPSMVVFSPQSKAPKEGYLDELRSYLCGKAELRPLLDGIENLPNTWSIFAQRNSDIAALTQGIRYTQALSDWAKHGTSSGISNVMSGILSLPLLTIIQVVQYFQFLEVKKLRHSDFMERLRCRGGVQGYCGGLMPAIAIACSATEAEVVTNAVKAMGIALGVGAYGELGDDENVLGPTTIVVRLKQEGQGGDIIKDFPDAHISAITDPKTVSIVGSAPSLAEIQARVKSNGMQTQAMHLRGKVHNPENANLALELCMLCDEHEELSLPNASHLTAPLRSNKTGKKLLDVSLTHEAIETILASCCQWYDLLKGVCKDLEKTGTQSHLFASFGIGDCIPLTPFHQAGLQITKLDVLSFVKALMPPVLPMSGHNHQYAYPTDAVAVVGMACRLPGANSVEELWDLISSGGSTVTPVPEDRMDIAGSFRAMQDPKWAAKQQWWGNFISDIAGFDHSFFRMSPREAASMDPQQRILLETAYQAMESSGYLGSHRRESGDPVGVFLGASFVEYLDNTSSNPPTAYTSTGTIRAFLSGKISYYFGWTGPSEILDTACSSSLVAINRACKAIQNDECPMALAGGVNLITGIHNYLDLAKAGFLSPSGQCKPFDGAADGYCRSEGAGLVVLKRLSQALTDGNQILGVITGASTNQGGLSPSLTVPHSAAQVKLYQNILHQAGMRPEQVSYCETHGTGTQAGDPLEIESVREVFGGPKRQDSMHIGSIKGNIGHCETAAGVAGLLKALVMVNKAAIPPLASHKSLNPKIAALEPDKLAISSCLEDWRVSPRAALVNSYGAAGSNSAVLLCQAPDIDNAPLHRVATTEHTYPIILSAASKPSLLSNAENIASYLRKATSKCTIADVAFTLVKQRKRHPLQWITMESSIDGLVKSLGSLQDPSNAPQPKKVVMTFSGQSRQSIGLNKEWYDSFPLFRRHVNECDDLLQQSGFPSCKSAMFDKEPARDVVPLQCAMFAVQYASALSWIDCGLQVEAVIGHSFGELTALAVSGTLSLKDALNLVATRATLMQSKWGPHKGTMLLISAATEMVRKIIAGNRDVEIACHNAPTSQIVVGTQAAISEVEKVLENNTEYRGIQSQRLNVTHGFHSQFTEPLLENLSESARSLVFHEPKILLECCTLEELNHVGPDHLARHTREPVYFYHAVRRLEQRLGTCLWLEAGFDSPIIPMTKRAVEFPERHTFLDMKTPSGTNPTKMLTTATINLWQNGATSSFWGFHPIETTNIKQVWLPPYQFDRTSHWMPYTDHALEMSKIQAVISNSEPLVELSTKPPRLVEPRTKPSEKGEFSMNTQARRYTEIVSGHAVLSRPLCPAAMYMECAIMAAQLSIGNIVGQAPWFENLTFEAPLGMDPDNDTTVVLKDDGSKSRWSFVARSTSRSNPKRKPVLHAKGDFGFTTQTQVHRYERLVTDRMRHLQHSKSETLKSKRAYGLFSRIVRYAELLKGISSITLGDSEASAIIDVPLGASTEDSSATGLCDCVALDAFIQVVGLLINSGDDCAEDEVFVATGVENFSMSLACDFDRCRTWLVFAMFTPSGNGKAMGDVFILTRDNVLVMTIMGVQFTKLPITRLEKLLDSANPKAHNTPILKSSQQDSIVSASSSSSTEHSDDDSEDDGSRSPSHSDTSVDSESEAPADNGAAKKLKSLIASYVGIAEDAISDDANIADLGVDSLAATELADEISNDFAKEIDGGELPMMTFGELCRIVAPEMAAKPAKAKKKIPYKGKDEATVVESHPGKSQSEIKDLKAVVEPLPRSTPMLSDTTVVRSDPTQVLRQIDTMFQSSADTFGFTDYWTAVAPKQNKLVLAYIGEEFRKLGLDLWAVQPGATLPHIEYLPKHEKVVQRLWDILADHGIVYNYDAAKVRSSKPLPDAPSTALLNELNALFPNFANENRLMSVTAPHFADGLRGKTDHISLLFGSQRGQECLNDFYNNSPQLAVMTDHLLTFFKQLLKEAPLEGSLRILEVGGGFGGTTKRLAEMLEALGQPVEYTFTDVSSMLVKEARKKFSKHSWMDFQSLNLEKDPPASLQRTYDIVIGTNVVHATSNIVNSTTRMRSLLRKGGFIVLSEVTRIVDWYDLVYGLLDGWWAFKDSRTYPLQPADDWVRDLMKAGFETASYSRGDSEESNTQQLIIGSTRPSKVASTSGLSEARLSKSYRIETMPYKIIDDTEILADVFFPEHEVASEAMPIALMIHGGGFMTLSKTAIRPYQTQFLVENGYLPISIDYRLCPEIDLIAGPMTDVRDALTWVRKQLPAIARTRGINVDPTKVVVIGWSTGGHLALTTAWTCEDIGEEPPVAVLSFYGPTNFESEDIDRRRAEQYPERTMSFDRIRKSLSTKPITSYDCPTGTDSTGLGWVRPGDPRSELVLSLFKESHGLQVMLNGLSAADLAKPPPLAKIQAISPMAQLKAGRYNVPTFVIHSDCDEIAPFRDSEAFVEELARRGVKTGLGRVRGKKHIHDLALKPEKDGWVDGAGVGYEFIFDVVGRGVRG.

Residues 13–260 (VFSPQSKAPK…HNPENANLAL (248 aa)) form an N-terminal acylcarrier protein transacylase domain (SAT) region. Residues 385 to 808 (TDAVAVVGMA…GSNSAVLLCQ (424 aa)) form the Ketosynthase family 3 (KS3) domain. Residues Cys-557, His-692, and His-731 each act as for beta-ketoacyl synthase activity in the active site. Residues 908–1199 (MTFSGQSRQS…EFPERHTFLD (292 aa)) form a malonyl-CoA:ACP transacylase (MAT) domain region. Catalysis depends on Ser-995, which acts as the For acyl/malonyl transferase activity. Residues 1286–1413 (PRLVEPRTKP…GDFGFTTQTQ (128 aa)) are N-terminal hotdog fold. The PKS/mFAS DH domain occupies 1286 to 1584 (PRLVEPRTKP…FTKLPITRLE (299 aa)). The tract at residues 1287 to 1583 (RLVEPRTKPS…QFTKLPITRL (297 aa)) is product template (PT) domain. The Proton acceptor; for dehydratase activity role is filled by His-1317. Positions 1433-1584 (SETLKSKRAY…FTKLPITRLE (152 aa)) are C-terminal hotdog fold. The active-site Proton donor; for dehydratase activity is Asp-1495. The tract at residues 1594–1649 (AHNTPILKSSQQDSIVSASSSSSTEHSDDDSEDDGSRSPSHSDTSVDSESEAPADN) is disordered. Positions 1602 to 1617 (SSQQDSIVSASSSSST) are enriched in low complexity. A Carrier domain is found at 1649–1725 (NGAAKKLKSL…RIVAPEMAAK (77 aa)). O-(pantetheine 4'-phosphoryl)serine is present on Ser-1683. The segment at 2164–2496 (KSYRIETMPY…YEFIFDVVGR (333 aa)) is thioesterase (TE) domain. Active-site for thioesterase activity residues include Ser-2285 and Asp-2434.

The catalysed reaction is 6 malonyl-CoA + 2 acetyl-CoA + 2 S-adenosyl-L-methionine + 3 H(+) = 4-O-demethylbarbatate + 2 S-adenosyl-L-homocysteine + 6 CO2 + 8 CoA + H2O. It functions in the pathway secondary metabolite biosynthesis; terpenoid biosynthesis. Functionally, non-reducing polyketide synthase; part of the gene cluster that mediates the biosynthesis of atranorin, a depside of polyketide origin that accumulates in the cortical or medullary layers of lichen thalli. The first step in the pathway is performed by the non-reducing polyketide synthase atr1 that produces 4-O-demethylbarbatic acid composed of two 3-methylorsellinic acid (3MOA) moieties from S-adenosyl-L-methionine (SAM), acetyl-CoA and malonyl-CoA units. The pathway continues with the actions of the cytochrome P450 monooygenase atr2 that catalizes the oxidation of c-9 and the O-methyltransferase atr3 that performs the methylation of the carboxyl group to yield atranorin, via the proatranorin II and III intermediates if atr2 acts first, or the proatranorin I intermediate if atr3 acts first. The protein is Non-reducing polyketide synthase atr1 of Stereocaulon alpinum (Alpine snow lichen).